We begin with the raw amino-acid sequence, 292 residues long: Elongation factor Ts (292 aa).

Residues 80–83 (TDFV) form an involved in Mg(2+) ion dislocation from EF-Tu region.

Belongs to the EF-Ts family.

It is found in the cytoplasm. Its function is as follows. Associates with the EF-Tu.GDP complex and induces the exchange of GDP to GTP. It remains bound to the aminoacyl-tRNA.EF-Tu.GTP complex up to the GTP hydrolysis stage on the ribosome. In Cupriavidus necator (strain ATCC 17699 / DSM 428 / KCTC 22496 / NCIMB 10442 / H16 / Stanier 337) (Ralstonia eutropha), this protein is Elongation factor Ts.